The following is a 155-amino-acid chain: Chaperone protein IpgC (155 aa).

It belongs to the LcrH/SycD chaperone family.

Its subcellular location is the cytoplasm. Functionally, assists the correct folding of nascent IpaB. Once it is bound to IpaB, it binds to IpaC and impedes their premature association that would lead to their degradation in the absence of IpcG. This chain is Chaperone protein IpgC (ipgC), found in Shigella dysenteriae.